The primary structure comprises 20 residues: Beta-fibrinogenase jerdofibrase (20 aa).

In terms of domain architecture, Peptidase S1 spans valine 1–tyrosine 20.

Belongs to the peptidase S1 family. Snake venom subfamily. Monomer. In terms of tissue distribution, expressed by the venom gland.

The protein localises to the secreted. Inhibited by PMSF and soybean trypsin inhibitor. Partially inhibited by DTT and cysteine. Not affected by EDTA. Fibrin(ogen)olytic serine protease degrades Bbeta-chain of human fibrinogen (FGB) and shows a lower activity on Aa-chain (FGA). Also degrades fibrin directly. Releases fibrinopeptide B and a small amount of fibrinopeptide A. Has also be shown to catalyze the hydrolysis of some chromogenic substrates such as S2238, S2160, S2302 and S2251. This Protobothrops jerdonii (Jerdon's pitviper) protein is Beta-fibrinogenase jerdofibrase.